We begin with the raw amino-acid sequence, 344 residues long: Meiotic recombination protein DMC1 homolog A (344 aa).

Residue 133–140 (GEFRSGKT) coordinates ATP. Residue Arg-235 participates in dsDNA binding. SsDNA-binding residues include Arg-235, Phe-238, Arg-241, Arg-247, and Arg-315. DsDNA is bound by residues Arg-241 and Arg-247.

This sequence belongs to the RecA family. DMC1 subfamily. In terms of tissue distribution, expressed in pollen mother cells and root tips.

Its subcellular location is the nucleus. Recombinase that may participate in meiotic recombination, specifically in homologous strand assimilation, which is required for the resolution of meiotic double-strand breaks. Exhibits DNA-dependent ATPase activity when bound to single-stranded DNA (ssDNA). Mediates renaturation of homologous complementary strands as well as assimilation of single strands into homologous supercoiled duplexes leading to D-loop formation. Binds circular single-stranded DNA (ssDNA) and circular double-stranded DNA (dsDNA) in vitro. Catalyzes DNA homologous renaturation and DNA strand exchange. The rates of these activities are dependent on the state of ATP hydrolysis. Forms helical filaments along ssDNA and dsDNA, and promotes strand exchange between ssDNA and dsDNA with long DNA substrates of several thousand base pairs. The presence of the replication protein A is not required for this activity. Seems to be required for homologous pairing and subsequent chromosome segregation during male meiosis. May be not directly required for homologous pairing during male meiosis. Required for synaptonemal complex assembly and crossover formation. Functions redundantly with DMC1B. This Oryza sativa subsp. indica (Rice) protein is Meiotic recombination protein DMC1 homolog A.